The chain runs to 256 residues: Thiazole synthase (256 aa).

Lysine 95 acts as the Schiff-base intermediate with DXP in catalysis. Residues glycine 156, 182-183 (AG), and 204-205 (NT) contribute to the 1-deoxy-D-xylulose 5-phosphate site.

It belongs to the ThiG family. In terms of assembly, homotetramer. Forms heterodimers with either ThiH or ThiS.

The protein resides in the cytoplasm. The enzyme catalyses [ThiS sulfur-carrier protein]-C-terminal-Gly-aminoethanethioate + 2-iminoacetate + 1-deoxy-D-xylulose 5-phosphate = [ThiS sulfur-carrier protein]-C-terminal Gly-Gly + 2-[(2R,5Z)-2-carboxy-4-methylthiazol-5(2H)-ylidene]ethyl phosphate + 2 H2O + H(+). Its pathway is cofactor biosynthesis; thiamine diphosphate biosynthesis. In terms of biological role, catalyzes the rearrangement of 1-deoxy-D-xylulose 5-phosphate (DXP) to produce the thiazole phosphate moiety of thiamine. Sulfur is provided by the thiocarboxylate moiety of the carrier protein ThiS. In vitro, sulfur can be provided by H(2)S. The chain is Thiazole synthase from Shigella dysenteriae serotype 1 (strain Sd197).